The following is a 417-amino-acid chain: MSQRLQSIKDHLVESAMGKGESKRKNSLLEKRPEDVVIVAANRSAIGKGFKGAFKDVNTDYLLYNFLNEFIGRFPEPLRADLNLIEEVACGNVLNVGAGATEHRAACLASGIPYSTPFVALNRQCSSGLTAVNDIANKIKVGQIDIGLALGVESMTNNYKNVNPLGMISSEELQKNREAKKCLIPMGITNENVAANFKISRKDQDEFAANSYQKAYKAKNEGLFEDEILPIKLPDGSICQSDEGPRPNVTAESLSSIRPAFIKDRGTTTAGNASQVSDGVAGVLLARRSVANQLNLPVLGRYIDFQTVGVPPEIMGVGPAYAIPKVLEATGLQVQDIDIFEINEAFAAQALYCIHKLGIDLNKVNPRGGAIALGHPLGCTGARQVATILRELKKDQIGVVSMCIGTGMGAAAIFIKE.

A peroxisome-targeting transit peptide spans 1 to 15 (MSQRLQSIKDHLVES). The tract at residues 1–15 (MSQRLQSIKDHLVES) is PTS2-type peroxisomal targeting signal. The active-site Acyl-thioester intermediate is Cys125. Catalysis depends on proton acceptor residues His375 and Cys403.

It belongs to the thiolase-like superfamily. Thiolase family. In terms of assembly, homodimer. Interacts (via PTS2-type peroxisomal targeting signal region) with PEX7; leading to its translocation into peroxisomes.

It is found in the peroxisome. The protein localises to the mitochondrion intermembrane space. The catalysed reaction is an acyl-CoA + acetyl-CoA = a 3-oxoacyl-CoA + CoA. It participates in lipid metabolism; fatty acid metabolism. In terms of biological role, responsible for the thiolytic cleavage of straight chain 3-keto fatty acyl-CoAs (3-oxoacyl-CoAs). This Saccharomyces cerevisiae (strain ATCC 204508 / S288c) (Baker's yeast) protein is 3-ketoacyl-CoA thiolase, peroxisomal (POT1).